Here is a 180-residue protein sequence, read N- to C-terminus: Adenine phosphoribosyltransferase (180 aa).

It belongs to the purine/pyrimidine phosphoribosyltransferase family. In terms of assembly, homodimer.

The protein resides in the cytoplasm. It catalyses the reaction AMP + diphosphate = 5-phospho-alpha-D-ribose 1-diphosphate + adenine. It functions in the pathway purine metabolism; AMP biosynthesis via salvage pathway; AMP from adenine: step 1/1. In terms of biological role, catalyzes a salvage reaction resulting in the formation of AMP, that is energically less costly than de novo synthesis. This chain is Adenine phosphoribosyltransferase, found in Mycobacterium avium (strain 104).